The sequence spans 218 residues: Small ribosomal subunit protein uS3c (218 aa).

The KH type-2 domain occupies V47–A120.

This sequence belongs to the universal ribosomal protein uS3 family. Part of the 30S ribosomal subunit.

The protein resides in the plastid. The protein localises to the chloroplast. The protein is Small ribosomal subunit protein uS3c (rps3) of Picea abies (Norway spruce).